The following is a 154-amino-acid chain: 6,7-dimethyl-8-ribityllumazine synthase (154 aa).

5-amino-6-(D-ribitylamino)uracil is bound by residues F22, 56–58 (AFE), and 80–82 (AVI). A (2S)-2-hydroxy-3-oxobutyl phosphate-binding site is contributed by 85–86 (AT). H88 (proton donor) is an active-site residue. F113 provides a ligand contact to 5-amino-6-(D-ribitylamino)uracil. Position 127 (R127) interacts with (2S)-2-hydroxy-3-oxobutyl phosphate.

The protein belongs to the DMRL synthase family.

It carries out the reaction (2S)-2-hydroxy-3-oxobutyl phosphate + 5-amino-6-(D-ribitylamino)uracil = 6,7-dimethyl-8-(1-D-ribityl)lumazine + phosphate + 2 H2O + H(+). The protein operates within cofactor biosynthesis; riboflavin biosynthesis; riboflavin from 2-hydroxy-3-oxobutyl phosphate and 5-amino-6-(D-ribitylamino)uracil: step 1/2. Its function is as follows. Catalyzes the formation of 6,7-dimethyl-8-ribityllumazine by condensation of 5-amino-6-(D-ribitylamino)uracil with 3,4-dihydroxy-2-butanone 4-phosphate. This is the penultimate step in the biosynthesis of riboflavin. The protein is 6,7-dimethyl-8-ribityllumazine synthase of Clostridium botulinum (strain 657 / Type Ba4).